A 770-amino-acid polypeptide reads, in one-letter code: MRGVWPPPVSALLSALGMSTYKRATLDEEDLVDSLSEGDAYPNGLQVNFHSPRSGQRCWAARTQVEKRLVVLVVLLAAGLVACLAALGIQYQTRSPSVCLSEACVSVTSSILSSMDPTVDPCHDFFSYACGGWIKANPVPDGHSRWGTFSNLWEHNQAIIKHLLENSTASVSEAERKAQVYYRACMNETRIEELRAKPLMELIERLGGWNITGPWAKDNFQDTLQVVTAHYRTSPFFSVYVSADSKNSNSNVIQVDQSGLGLPSRDYYLNKTENEKVLTGYLNYMVQLGKLLGGGDEEAIRPQMQQILDFETALANITIPQEKRRDEELIYHKVTAAELQTLAPAINWLPFLNTIFYPVEINESEPIVVYDKEYLEQISTLINTTDRCLLNNYMIWNLVRKTSSFLDQRFQDADEKFMEVMYGTKKTCLPRWKFCVSDTENNLGFALGPMFVKATFAEDSKSIATEIILEIKKAFEESLSTLKWMDEETRKSAKEKADAIYNMIGYPNFIMDPKELDKVFNDYTAVPDLYFENAMRFFNFSWRVTADQLRKAPNRDQWSMTPPMVNAYYSPTKNEIVFPAGILQAPFYTRSSPKALNFGGIGVVVGHELTHAFDDQGREYDKDGNLRPWWKNSSVEAFKRQTECMVEQYSNYSVNGEPVNGRHTLGENIADNGGLKAAYRAYQNWVKKNGAEHSLPTLGLTNNQLFFLGFAQVWCSVRTPESSHEGLITDPHSPSRFRVIGSLSNSKEFSEHFRCPPGSPMNPPHKCEVW.

Residues 1–68 (MRGVWPPPVS…WAARTQVEKR (68 aa)) lie on the Cytoplasmic side of the membrane. Residue threonine 25 is modified to Phosphothreonine. Residues 69–89 (LVVLVVLLAAGLVACLAALGI) traverse the membrane as a helical; Signal-anchor for type II membrane protein segment. Over 90–770 (QYQTRSPSVC…MNPPHKCEVW (681 aa)) the chain is Extracellular. The Peptidase M13 domain occupies 98–770 (VCLSEACVSV…MNPPHKCEVW (673 aa)). 5 cysteine pairs are disulfide-bonded: cysteine 99-cysteine 104, cysteine 122-cysteine 755, cysteine 130-cysteine 715, cysteine 185-cysteine 435, and cysteine 644-cysteine 767. Residues asparagine 166, asparagine 187, asparagine 210, asparagine 270, asparagine 316, asparagine 362, asparagine 383, and asparagine 539 are each glycosylated (N-linked (GlcNAc...) asparagine). Residue histidine 607 coordinates Zn(2+). Glutamate 608 is an active-site residue. Histidine 611 is a Zn(2+) binding site. N-linked (GlcNAc...) asparagine glycosylation is found at asparagine 632 and asparagine 651. Zn(2+) is bound at residue glutamate 667. The active-site Proton donor is the aspartate 671.

This sequence belongs to the peptidase M13 family. In terms of assembly, homodimer; disulfide-linked. Interacts with PPP1R16B. Interacts with TSPAN8; this interaction recruits the endothelin converting enzyme ECE1 to tetraspanin-enriched microdomains and positively modulates its enzymatic activity. It depends on Zn(2+) as a cofactor. In terms of tissue distribution, all isoforms are expressed in umbilical vein endothelial cells, polynuclear neutrophils, fibroblasts, atrium cardiomyocytes and ventricles. Isoforms A, B and C are also expressed in placenta, lung, heart, adrenal gland and phaeochromocytoma; isoforms A and C in liver, testis and small intestine; isoform B, C and D in endothelial cells and umbilical vein smooth muscle cells; isoforms C and D in saphenous vein cells, and isoform C in kidney.

Its subcellular location is the cell membrane. It carries out the reaction Hydrolysis of the 21-Trp-|-Val-22 bond in big endothelin to form endothelin 1.. Inhibited by phosphoramidon. Activated by K49-P1-20, a twenty-residue synthetic peptide shortened from the snake B.asper myotoxin II. Converts big endothelin-1 to endothelin-1. This is Endothelin-converting enzyme 1 (ECE1) from Homo sapiens (Human).